A 225-amino-acid chain; its full sequence is Insulin-induced gene 2 protein (225 aa).

Over 1-28 (MAEGETESPGPKKCGPYISSVTSQSVNL) the chain is Cytoplasmic. The helical transmembrane segment at 29 to 51 (MIRGVVLFFIGVFLALVLNLLQI) threads the bilayer. Residues 52–70 (QRNVTLFPPDVIASIFSSA) are Lumenal-facing. The helical transmembrane segment at 71–88 (WWVPPCCGTASAVIGLLY) threads the bilayer. Residues 89 to 103 (PCIDRHLGEPHKFKR) are Cytoplasmic-facing. The helical transmembrane segment at 104 to 126 (EWSSVMRCVAVFVGINHASAKVD) threads the bilayer. The Lumenal segment spans residues 127–129 (FDN). The chain crosses the membrane as a helical span at residues 130–148 (NIQLSLTLAALSIGLWWTF). Residues 149–153 (DRSRS) are Cytoplasmic-facing. Residue Ser151 is modified to Phosphoserine. Residues 154–175 (GFGLGVGIAFLATLVTQLLVYN) form a helical membrane-spanning segment. Topologically, residues 176 to 189 (GVYQYTSPDFLYVR) are lumenal. A helical membrane pass occupies residues 190–207 (SWLPCIFFAGGITMGNIG). The Cytoplasmic portion of the chain corresponds to 208-225 (RQLAMYECKVIAEKSHQE). A Cysteine sulfenic acid (-SOH); alternate modification is found at Cys215. A Glycyl cysteine thioester (Cys-Gly) (interchain with G-Cter in ubiquitin); alternate cross-link involves residue Cys215. The KxHxx signature appears at 219-225 (AEKSHQE).

It belongs to the INSIG family. As to quaternary structure, interacts with SCAP; interaction is direct and only takes place in the presence of sterols; it prevents interaction between SCAP and the coat protein complex II (COPII). Associates with the SCAP-SREBP complex (composed of SCAP and SREBF1/SREBP1 or SREBF2/SREBP2); association is mediated via its interaction with SCAP and only takes place in the presence of sterols. Interacts with RNF139. Interacts with RNF145. In terms of processing, phosphorylation at Ser-151 by PCK1 reduces binding to oxysterol, disrupting the interaction between INSIG2 and SCAP, thereby promoting nuclear translocation of SREBP proteins (SREBF1/SREBP1 or SREBF2/SREBP2) and subsequent transcription of downstream lipogenesis-related genes. Post-translationally, polyubiquitinated by AMFR/gp78 at Cys-215 in some tissues such as adipose tissues, undifferentiated myoblasts and liver, leading to its degradation. In differentiated myotubes, Cys-215 oxidation prevents ubiquitination at the same site, resulting in protein stabilization. Oxidized at Cys-215 in differentiated myotubes, preventing ubiquitination at the same site, and resulting in protein stabilization.

The protein resides in the endoplasmic reticulum membrane. Its function is as follows. Oxysterol-binding protein that mediates feedback control of cholesterol synthesis by controlling both endoplasmic reticulum to Golgi transport of SCAP and degradation of HMGCR. Acts as a negative regulator of cholesterol biosynthesis by mediating the retention of the SCAP-SREBP complex in the endoplasmic reticulum, thereby blocking the processing of sterol regulatory element-binding proteins (SREBPs) SREBF1/SREBP1 and SREBF2/SREBP2. Binds oxysterol, including 22-hydroxycholesterol, 24-hydroxycholesterol, 25-hydroxycholesterol and 27-hydroxycholesterol, regulating interaction with SCAP and retention of the SCAP-SREBP complex in the endoplasmic reticulum. In presence of oxysterol, interacts with SCAP, retaining the SCAP-SREBP complex in the endoplasmic reticulum, thereby preventing SCAP from escorting SREBF1/SREBP1 and SREBF2/SREBP2 to the Golgi. Sterol deprivation or phosphorylation by PCK1 reduce oxysterol-binding, disrupting the interaction between INSIG2 and SCAP, thereby promoting Golgi transport of the SCAP-SREBP complex, followed by processing and nuclear translocation of SREBF1/SREBP1 and SREBF2/SREBP2. Also regulates cholesterol synthesis by regulating degradation of HMGCR: initiates the sterol-mediated ubiquitin-mediated endoplasmic reticulum-associated degradation (ERAD) of HMGCR via recruitment of the reductase to the ubiquitin ligase RNF139. The sequence is that of Insulin-induced gene 2 protein from Papio anubis (Olive baboon).